We begin with the raw amino-acid sequence, 286 residues long: Phosphatidylserine decarboxylase proenzyme (286 aa).

Active-site charge relay system; for autoendoproteolytic cleavage activity residues include D90, H147, and S252. Catalysis depends on S252, which acts as the Schiff-base intermediate with substrate; via pyruvic acid; for decarboxylase activity. S252 bears the Pyruvic acid (Ser); by autocatalysis mark.

The protein belongs to the phosphatidylserine decarboxylase family. PSD-B subfamily. Prokaryotic type I sub-subfamily. Heterodimer of a large membrane-associated beta subunit and a small pyruvoyl-containing alpha subunit. Pyruvate is required as a cofactor. Post-translationally, is synthesized initially as an inactive proenzyme. Formation of the active enzyme involves a self-maturation process in which the active site pyruvoyl group is generated from an internal serine residue via an autocatalytic post-translational modification. Two non-identical subunits are generated from the proenzyme in this reaction, and the pyruvate is formed at the N-terminus of the alpha chain, which is derived from the carboxyl end of the proenzyme. The autoendoproteolytic cleavage occurs by a canonical serine protease mechanism, in which the side chain hydroxyl group of the serine supplies its oxygen atom to form the C-terminus of the beta chain, while the remainder of the serine residue undergoes an oxidative deamination to produce ammonia and the pyruvoyl prosthetic group on the alpha chain. During this reaction, the Ser that is part of the protease active site of the proenzyme becomes the pyruvoyl prosthetic group, which constitutes an essential element of the active site of the mature decarboxylase.

Its subcellular location is the cell membrane. The catalysed reaction is a 1,2-diacyl-sn-glycero-3-phospho-L-serine + H(+) = a 1,2-diacyl-sn-glycero-3-phosphoethanolamine + CO2. It functions in the pathway phospholipid metabolism; phosphatidylethanolamine biosynthesis; phosphatidylethanolamine from CDP-diacylglycerol: step 2/2. Its function is as follows. Catalyzes the formation of phosphatidylethanolamine (PtdEtn) from phosphatidylserine (PtdSer). This is Phosphatidylserine decarboxylase proenzyme from Pseudomonas fluorescens (strain Pf0-1).